The chain runs to 664 residues: MKQNIKRNWIWILIVMIVIGIILYFSIRNLFSTKVAEWSISELLNNIERAKENTTDALYFKEITVNPFTNSITGVFNNTDNTSTSFVTYTNLDLLRLSGVASDQGVISKIFTPEVFLTANNVSGSLKSVATPQPNPFLGILISSVPVLILIFVMVWIYRSQVKMMNGQGGAFGGDKGTAQIIKSDKKFTDIAGNKEPIEEISEVVDYLKNPGKYQQSGARMPHGILLGGPPGTGKTLLAKATAGEANVPFYFVSASSFVELFVGMGAKRVRQVISEARKNSPAIIFIDELDAIGRTRGSGIGGGHDEREQTLNQLLVEMDGMKENSGLLFIAATNRTDVLDPALIRPGRFDRIITVGLPDVKEREEILKLHAKGKRFESNVDFANIAKRTPGFSGAQLENVINEAVLLSIREDTKVINLYQIDEAIDRVMSGPAKKSRTITKEELTMVAYHEAGHAVVGIKVPGGNKVQKITIIPRGNAGGYNLMMPENEKYNYSKADLYATIASFMGGRAAEEIIYGDNKISTGAADDIKKATSIARRMVTQFGMSDLGPIEYQSDEGSPFLGKALASNSSLSNQVNHEIELEIRKIIFTAKEQATKIIKQNIELLELIKESLLKKETIVGEEIEYIAKHMKLPPEKIEEKDLSKNSEDNNLDSLIEKTSKKE.

The Cytoplasmic segment spans residues 1-9 (MKQNIKRNW). Residues 10 to 30 (IWILIVMIVIGIILYFSIRNL) form a helical membrane-spanning segment. Residues 31–136 (FSTKVAEWSI…KSVATPQPNP (106 aa)) lie on the Extracellular side of the membrane. A helical transmembrane segment spans residues 137–157 (FLGILISSVPVLILIFVMVWI). Residues 158 to 664 (YRSQVKMMNG…SLIEKTSKKE (507 aa)) lie on the Cytoplasmic side of the membrane. 229 to 236 (GPPGTGKT) is an ATP binding site. His-451 is a Zn(2+) binding site. The active site involves Glu-452. 2 residues coordinate Zn(2+): His-455 and Asp-529. Positions 639–649 (IEEKDLSKNSE) are enriched in basic and acidic residues. The disordered stretch occupies residues 639–664 (IEEKDLSKNSEDNNLDSLIEKTSKKE).

It in the central section; belongs to the AAA ATPase family. The protein in the C-terminal section; belongs to the peptidase M41 family. In terms of assembly, homohexamer. Requires Zn(2+) as cofactor.

The protein resides in the cell membrane. Functionally, acts as a processive, ATP-dependent zinc metallopeptidase for both cytoplasmic and membrane proteins. Plays a role in the quality control of integral membrane proteins. The protein is ATP-dependent zinc metalloprotease FtsH of Mycoplasmopsis synoviae (strain 53) (Mycoplasma synoviae).